Reading from the N-terminus, the 233-residue chain is Small ribosomal subunit protein uS2c (233 aa).

It belongs to the universal ribosomal protein uS2 family.

The protein localises to the plastid. The protein resides in the chloroplast. The protein is Small ribosomal subunit protein uS2c (rps2) of Galdieria sulphuraria (Red alga).